The chain runs to 963 residues: MAEGGGCRERPDAETQKSELGALMRTTLQRGAQWYLIDSRWFKQWKKYVGFGSWDMYNVGEHNLFPGPIDNSGLFSDPESQTLKEHLIDELDYVLVPTEAWNKLLNWYGCVEGQQPIVRKVVEHGLFVKHCKVEVYLLELKLCENSDPTNVLSCHFSKADTIATIEKEMRKLFNIPAEREARLWNKYMSNTYEQLSKLDNTVQDAGLYLGQVLVIEPQNEDGTWPRQTLQSKSSTAPSRNFTTSPKSSASPYSSVSDSLIANGDSTSTCGMHSSGVSRGGSGFSASYNCQEPPSSHIQPGLCGLGNLGNTCFMNSALQCLSNTAPLTDYFLKDEYEAEINRDNPLGMKGEIAEAYAELIKQMWSGRDAHVAPRMFKTQVGRFAPQFSGYQQQDSQELLAFLLDGLHEDLNRVKKKPYLELKDANGRPDVVVAKEAWENHRLRNDSVIVDTFHGLFKSTLVCPECAKVSVTFDPFCYLTLPLPLKKDRVMEVFLVPADPHCRPTQYRVTVPLMGAVSDLCEALSRLSGIAAENMVVADVYNHRFHKIFQMDEGLNHIMPRDDIFVYEVCSTSVDGSECVTLPVYFRERKSRPSSTSSASALYGQPLLLSVPKHKLTLESLYQAVCDRISRYVKQPLPDEFGSSPLEPGACNGSRNSCEGEDEEEMEHQEEGKEQLSETEGSGEDEPGSDPSETTQKKIKGQPCPKRLFTFSLVNSYGTADINSLAADGKLLKLNSRSTLAMDWDSETRSLYYDEQESEAYEKHVSMLQPQKKKKTTVALRDCIELFTTMETLGEHDPWYCPNCKKHQQATKKSDLWSLPKILVVHLKRFSYNRYWRDKLDTVVEFPIRGLNMSEFVCNLSARPYVYDLIAVSNHYGAMGVGHYTAYAKNKLNGKWYYFDDSNVSLASEDQIVTKAAYVLFYQRRDDEFYKTPSLSSSGSSDGGTRPSSSQQGLGDDEACSMDTN.

The region spanning 11-122 is the DUSP domain; sequence PDAETQKSEL…GQQPIVRKVV (112 aa). The necessary for interaction with SART3 stretch occupies residues 27–216; sequence TLQRGAQWYL…LYLGQVLVIE (190 aa). Residues 133–141 carry the Nuclear export signal motif; that stretch reads VEVYLLELK. One can recognise a Ubiquitin-like 1 domain in the interval 142–226; it reads LCENSDPTNV…PQNEDGTWPR (85 aa). Positions 220–255 are disordered; that stretch reads EDGTWPRQTLQSKSSTAPSRNFTTSPKSSASPYSSV. Residues 225 to 243 are compositionally biased toward polar residues; sequence PRQTLQSKSSTAPSRNFTT. Residues 229-295 form a required for USP4 activation by providing conformational flexibility between the DUSP and catalytic domains region; that stretch reads LQSKSSTAPS…SYNCQEPPSS (67 aa). The segment covering 244–255 has biased composition (low complexity); it reads SPKSSASPYSSV. The USP domain maps to 302 to 923; it reads CGLGNLGNTC…AAYVLFYQRR (622 aa). The active-site Nucleophile is the C311. Residues 384–386 are regulates ubiquitin dissociation; it reads PQF. The tract at residues 405-407 is necessary for interaction with RBL2; it reads LHE. S445 is subject to Phosphoserine. The necessary for interaction with RB1 and RBL2 stretch occupies residues 459–463; that stretch reads LVCPE. 2 residues coordinate Zn(2+): C461 and C464. Residues 483–571 enclose the Ubiquitin-like 2 domain; that stretch reads LKKDRVMEVF…IFVYEVCSTS (89 aa). Positions 485 to 775 are interacts with DUSP and ubiquitin-like 1 domains and is required for USP4 activation; the sequence is KDRVMEVFLV…LQPQKKKKTT (291 aa). The tract at residues 637-698 is disordered; that stretch reads DEFGSSPLEP…PSETTQKKIK (62 aa). At S655 the chain carries Phosphoserine. The span at 657 to 666 shows a compositional bias: acidic residues; it reads EGEDEEEMEH. Phosphoserine is present on residues S675 and S680. Residues 767-772 carry the Nuclear localization signal motif; that stretch reads QPQKKK. Zn(2+)-binding residues include C799 and C802. The active-site Proton acceptor is H881. The tract at residues 928 to 963 is disordered; sequence YKTPSLSSSGSSDGGTRPSSSQQGLGDDEACSMDTN. A compositionally biased stretch (low complexity) spans 932–948; the sequence is SLSSSGSSDGGTRPSSS. The segment covering 953–963 has biased composition (acidic residues); sequence GDDEACSMDTN.

Belongs to the peptidase C19 family. USP4 subfamily. As to quaternary structure, interacts with RB1 (both dephosphorylated and hypophosphorylated forms). Interacts with RBL1 and RBL2. Interacts with ADORA2A (via cytoplasmic C-terminus); the interaction is direct. Interacts with SART3; recruits USP4 to its substrate PRPF3. Phosphorylated at Ser-445 by PKB/AKT1 in response to EGF stimulus, promoting its ability deubiquitinate RHEB. In terms of processing, monoubiquitinated by TRIM21. Ubiquitination does not lead to its proteasomal degradation. Autodeubiquitinated.

Its subcellular location is the cytoplasm. It localises to the nucleus. The catalysed reaction is Thiol-dependent hydrolysis of ester, thioester, amide, peptide and isopeptide bonds formed by the C-terminal Gly of ubiquitin (a 76-residue protein attached to proteins as an intracellular targeting signal).. The completion of the deubiquitinase reaction is mediated by the DUSP and ubiquitin-like 1 domains which promotes the release of ubiquitin from the catalytic site enabling subsequent reactions to occur. Deubiquitinating enzyme that removes conjugated ubiquitin from target proteins. Deubiquitinates PDPK1. Deubiquitinates TRIM21. Deubiquitinates receptor ADORA2A which increases the amount of functional receptor at the cell surface. Deubiquitinates HAS2. Deubiquitinates RHEB in response to EGF signaling, promoting mTORC1 signaling. May regulate mRNA splicing through deubiquitination of the U4 spliceosomal protein PRPF3. This may prevent its recognition by the U5 component PRPF8 thereby destabilizing interactions within the U4/U6.U5 snRNP. May also play a role in the regulation of quality control in the ER. The polypeptide is Ubiquitin carboxyl-terminal hydrolase 4 (USP4) (Pongo abelii (Sumatran orangutan)).